Reading from the N-terminus, the 319-residue chain is tRNA U34 carboxymethyltransferase (319 aa).

Carboxy-S-adenosyl-L-methionine is bound by residues K88, W102, K107, G126, 176-177 (LE), M192, Y196, and R311.

It belongs to the class I-like SAM-binding methyltransferase superfamily. CmoB family. In terms of assembly, homotetramer.

It catalyses the reaction carboxy-S-adenosyl-L-methionine + 5-hydroxyuridine(34) in tRNA = 5-carboxymethoxyuridine(34) in tRNA + S-adenosyl-L-homocysteine + H(+). Its function is as follows. Catalyzes carboxymethyl transfer from carboxy-S-adenosyl-L-methionine (Cx-SAM) to 5-hydroxyuridine (ho5U) to form 5-carboxymethoxyuridine (cmo5U) at position 34 in tRNAs. The protein is tRNA U34 carboxymethyltransferase of Pseudomonas syringae pv. syringae (strain B728a).